The sequence spans 525 residues: Coronin-2A (525 aa).

WD repeat units lie at residues 80 to 120, 130 to 170, 178 to 217, 220 to 263, and 269 to 308; these read GHRG…LTKN, GHAR…SVIM, CHQD…VLQE, YKGH…VPVT, and GSSG…PHLN. The stretch at 485–524 forms a coiled coil; that stretch reads QMFYRQQDEIRRLRELVTQREVQAKQLELEIRNLRMNSPR.

This sequence belongs to the WD repeat coronin family. Binds actin. Component of the N-Cor repressor complex, at least composed of NCOR1, NCOR2, HDAC3, TBL1X, TBL1R, CORO2A and GPS2.

In Bos taurus (Bovine), this protein is Coronin-2A (CORO2A).